We begin with the raw amino-acid sequence, 136 residues long: MLQPKRTKFRKMMKGRNRGLATGYKVSFGEIGLQAVSRCRMTARQIESARRAMTRHVKRQGKIWIRVFPDKPITKKPLEVRMGKGKGSVEYWVAQIKPGQMLFEMQGVDEIIIREAFALAAAKLPVKTTIIKRTVM.

It belongs to the universal ribosomal protein uL16 family. As to quaternary structure, part of the 50S ribosomal subunit.

Its function is as follows. Binds 23S rRNA and is also seen to make contacts with the A and possibly P site tRNAs. This is Large ribosomal subunit protein uL16 from Ruthia magnifica subsp. Calyptogena magnifica.